The following is a 535-amino-acid chain: Probable acyl-activating enzyme 22 (535 aa).

The protein belongs to the ATP-dependent AMP-binding enzyme family.

May act as an acid--thiol ligase that activates carboxylic acids by forming acyl-CoAs. The protein is Probable acyl-activating enzyme 22 (AEE22) of Arabidopsis thaliana (Mouse-ear cress).